Reading from the N-terminus, the 355-residue chain is 5-formaminoimidazole-4-carboxamide-1-(beta)-D-ribofuranosyl 5'-monophosphate synthetase (355 aa).

Residues H27 and S94 each coordinate 5-amino-1-(5-phospho-beta-D-ribosyl)imidazole-4-carboxamide. An ATP-grasp domain is found at 101–332; the sequence is TESFAELAVP…YSDMIEENLS (232 aa). ATP-binding positions include 144-195 and E225; that span reads PEKI…TRYY. N254 serves as a coordination point for 5-amino-1-(5-phospho-beta-D-ribosyl)imidazole-4-carboxamide. 2 residues coordinate Mg(2+): E292 and E305.

It belongs to the phosphohexose mutase family. Requires Mg(2+) as cofactor. Mn(2+) serves as cofactor.

The enzyme catalyses 5-amino-1-(5-phospho-beta-D-ribosyl)imidazole-4-carboxamide + formate + ATP = 5-formamido-1-(5-phospho-D-ribosyl)imidazole-4-carboxamide + ADP + phosphate. The protein operates within purine metabolism; IMP biosynthesis via de novo pathway; 5-formamido-1-(5-phospho-D-ribosyl)imidazole-4-carboxamide from 5-amino-1-(5-phospho-D-ribosyl)imidazole-4-carboxamide (formate route): step 1/1. Functionally, catalyzes the ATP- and formate-dependent formylation of 5-aminoimidazole-4-carboxamide-1-beta-d-ribofuranosyl 5'-monophosphate (AICAR) to 5-formaminoimidazole-4-carboxamide-1-beta-d-ribofuranosyl 5'-monophosphate (FAICAR) in the absence of folates. This Methanococcoides burtonii (strain DSM 6242 / NBRC 107633 / OCM 468 / ACE-M) protein is 5-formaminoimidazole-4-carboxamide-1-(beta)-D-ribofuranosyl 5'-monophosphate synthetase.